The primary structure comprises 501 residues: U6 snRNA (guanine-N(2))-methyltransferase THUMPD2 (501 aa).

Residues 149–264 (TEQIQELQET…DVYSVLGIPV (116 aa)) enclose the THUMP domain. The disordered stretch occupies residues 414 to 469 (LKGGEASSGPLNSQGGHTEEPGGEERLTPAEKAAVSEPVSSPFAASNQGRLDRMPP). Positions 430-442 (HTEEPGGEERLTP) are enriched in basic and acidic residues.

This sequence belongs to the methyltransferase superfamily. In terms of assembly, part of the heterodimeric THUMPD2-TRM112 methyltransferase complex; this complex forms an active tRNA methyltransferase, where TRMT112 acts as an activator of the catalytic subunit THUMPD2.

It is found in the nucleus. The enzyme catalyses guanosine in U6 snRNA + S-adenosyl-L-methionine = N(2)-methylguanosine in U6 snRNA + S-adenosyl-L-homocysteine + H(+). Its function is as follows. Catalytic subunit of the THUMPD2-TRM112 methyltransferase complex, that specifically mediates the S-adenosyl-L-methionine-dependent N(2)-methylation of guanosine nucleotides, most probably at position 72 (m2G72), in the U6snRNA of the major spliceosome. This modification in the U6 snRNA affects the constitutive splicing efficiency of introns that have suboptimal splice sites and can impact final mRNA levels. The chain is U6 snRNA (guanine-N(2))-methyltransferase THUMPD2 from Bos taurus (Bovine).